The chain runs to 119 residues: Large ribosomal subunit protein bL20c (119 aa).

It belongs to the bacterial ribosomal protein bL20 family.

The protein localises to the plastid. The protein resides in the chloroplast. In terms of biological role, binds directly to 23S ribosomal RNA and is necessary for the in vitro assembly process of the 50S ribosomal subunit. It is not involved in the protein synthesizing functions of that subunit. The protein is Large ribosomal subunit protein bL20c (rpl20) of Pinus thunbergii (Japanese black pine).